Here is a 1531-residue protein sequence, read N- to C-terminus: Protein turtle (1531 aa).

The Extracellular portion of the chain corresponds to 1–858 (MGVCADLGSH…PARVKHKAIT (858 aa)). Residues 19–44 (QHNTEKSKEQQQQSQPLEIPEQRASK) are disordered. Ig-like C2-type domains follow at residues 132 to 243 (PEDA…KNGT), 253 to 340 (PRFS…ARVI), 344 to 436 (GAVI…AYLS), 440 to 529 (PAKV…GVMD), and 536 to 624 (PAFT…MAVT). Disulfide bonds link cysteine 150-cysteine 227, cysteine 275-cysteine 324, cysteine 366-cysteine 419, cysteine 462-cysteine 513, and cysteine 558-cysteine 611. Fibronectin type-III domains follow at residues 632–728 (QPHA…TLED) and 760–851 (PPRN…VPAR). The helical transmembrane segment at 859 to 879 (AGVVGGILFFIVAIILSVCAV) threads the bilayer. The Cytoplasmic portion of the chain corresponds to 880–1531 (KICNKRKRRK…QAMQQMESVC (652 aa)). 2 disordered regions span residues 1248-1269 (EETR…VPLQ) and 1318-1395 (NLNL…SYPR). The span at 1333–1349 (SPESRSSSSGFGSKNTS) shows a compositional bias: low complexity. The segment covering 1380-1389 (QQAQGQTPHG) has biased composition (polar residues).

This sequence belongs to the immunoglobulin superfamily. Turtle family. Interacts with bdl. As to expression, exclusively expressed in the central nervous system.

It localises to the membrane. Essential protein that plays a role in the establishment of coordinated motor control. In the developing eye, involved in axonal targeting of the R7 photoreceptor. The protein is Protein turtle (tutl) of Drosophila melanogaster (Fruit fly).